The following is a 96-amino-acid chain: Protein RnfH (96 aa).

This sequence belongs to the UPF0125 (RnfH) family.

The sequence is that of Protein RnfH from Escherichia coli O127:H6 (strain E2348/69 / EPEC).